Consider the following 204-residue polypeptide: Small ribosomal subunit protein uS4 (204 aa).

Residues 22 to 43 (SGKELARRPYAPGDHGNTGRRP) form a disordered region. Residues 94–154 (TRLDSVVFRL…ERSKKIVPIL (61 aa)) enclose the S4 RNA-binding domain.

This sequence belongs to the universal ribosomal protein uS4 family. As to quaternary structure, part of the 30S ribosomal subunit. Contacts protein S5. The interaction surface between S4 and S5 is involved in control of translational fidelity.

Its function is as follows. One of the primary rRNA binding proteins, it binds directly to 16S rRNA where it nucleates assembly of the body of the 30S subunit. With S5 and S12 plays an important role in translational accuracy. The chain is Small ribosomal subunit protein uS4 from Oenococcus oeni (strain ATCC BAA-331 / PSU-1).